A 1426-amino-acid chain; its full sequence is DNA-directed RNA polymerase subunit beta' (1426 aa).

Residues cysteine 71, cysteine 73, cysteine 86, and cysteine 89 each coordinate Zn(2+). The Mg(2+) site is built by aspartate 461, aspartate 463, and aspartate 465. The Zn(2+) site is built by cysteine 814, cysteine 888, cysteine 895, and cysteine 898. A disordered region spans residues 1392–1426 (ADPIAAAESAIGLGGGEQPATSETGAGGSDPSEEG).

The protein belongs to the RNA polymerase beta' chain family. The RNAP catalytic core consists of 2 alpha, 1 beta, 1 beta' and 1 omega subunit. When a sigma factor is associated with the core the holoenzyme is formed, which can initiate transcription. It depends on Mg(2+) as a cofactor. Requires Zn(2+) as cofactor.

The catalysed reaction is RNA(n) + a ribonucleoside 5'-triphosphate = RNA(n+1) + diphosphate. In terms of biological role, DNA-dependent RNA polymerase catalyzes the transcription of DNA into RNA using the four ribonucleoside triphosphates as substrates. The sequence is that of DNA-directed RNA polymerase subunit beta' from Alkalilimnicola ehrlichii (strain ATCC BAA-1101 / DSM 17681 / MLHE-1).